The sequence spans 276 residues: Large ribosomal subunit protein uL2 (276 aa).

2 disordered regions span residues 33–55 (LVEAQGRSGGRNNNGRITSRHIG) and 221–276 (RGTA…AKKK).

Belongs to the universal ribosomal protein uL2 family. In terms of assembly, part of the 50S ribosomal subunit. Forms a bridge to the 30S subunit in the 70S ribosome.

In terms of biological role, one of the primary rRNA binding proteins. Required for association of the 30S and 50S subunits to form the 70S ribosome, for tRNA binding and peptide bond formation. It has been suggested to have peptidyltransferase activity; this is somewhat controversial. Makes several contacts with the 16S rRNA in the 70S ribosome. This is Large ribosomal subunit protein uL2 from Psychrobacter sp. (strain PRwf-1).